Consider the following 142-residue polypeptide: Large ribosomal subunit protein uL13 (142 aa).

It belongs to the universal ribosomal protein uL13 family. In terms of assembly, part of the 50S ribosomal subunit.

Functionally, this protein is one of the early assembly proteins of the 50S ribosomal subunit, although it is not seen to bind rRNA by itself. It is important during the early stages of 50S assembly. The polypeptide is Large ribosomal subunit protein uL13 (Buchnera aphidicola subsp. Acyrthosiphon pisum (strain 5A)).